Consider the following 935-residue polypeptide: GPI ethanolamine phosphate transferase 1 (935 aa).

Residues 1 to 5 (MFGRL) lie on the Cytoplasmic side of the membrane. The chain crosses the membrane as a helical span at residues 6-26 (LLLGILFHVVFLKSIFDIYFV). At 27-449 (TPLIHGMKQY…LQRYDWLLLR (423 aa)) the chain is on the lumenal side. Residues Asn86, Asn134, Asn315, and Asn398 are each glycosylated (N-linked (GlcNAc...) asparagine). The helical transmembrane segment at 450-470 (SIVFFGYLSWIGYVICFVFSL) threads the bilayer. The Cytoplasmic portion of the chain corresponds to 471 to 483 (NIEPSSKIVKPVS). Residues 484–503 (VVKRVAFNIPFLLICIFFYI) form a helical membrane-spanning segment. Topologically, residues 504–509 (QSSPPF) are lumenal. A helical transmembrane segment spans residues 510-530 (YYGYALFPTIFLQLIHSIFPN). Topologically, residues 531-547 (TKLGFKNFLTVAKQKHG) are cytoplasmic. A helical transmembrane segment spans residues 548 to 568 (FSLLKILFISLCILCLLQFIV). Over 569 to 576 (YSYFHREG) the chain is Lumenal. Residues 577–597 (FSVILMGLAAWPWLLHADYAF) traverse the membrane as a helical segment. Over 598-600 (SHK) the chain is Cytoplasmic. A helical transmembrane segment spans residues 601 to 621 (TISVSWSVLTSLLCFFTILPV). Residues 622–626 (NKKES) are Lumenal-facing. Residues 627-647 (LLFIFAGGFAMSVAGVFYILY) traverse the membrane as a helical segment. The Cytoplasmic segment spans residues 648–663 (RRNQAFQYSSTVTNKQ). A helical transmembrane segment spans residues 664-684 (LVLQVLIIMATVPVTLKIADS). Residues 685–688 (LQRN) are Lumenal-facing. Residues 689–709 (IAIPPILRLVAFGLFITSYII) traverse the membrane as a helical segment. The Cytoplasmic segment spans residues 710-737 (PSHHIRSCKHYFLDRLAILFLTFSPTMC). Residues 738–758 (MLSISFEALFYVVLFITLGLW) form a helical membrane-spanning segment. The Lumenal segment spans residues 759–792 (MELETELQKYTEQLHPEYSRKKDAKFHLSLSHIR). Residues 793–813 (ISLFFYIFINVAFFGTGNVAS) traverse the membrane as a helical segment. Over 814–835 (LSTFALDSVKRFIPVFNPVTQG) the chain is Cytoplasmic. The chain crosses the membrane as a helical span at residues 836–856 (ALLMYTILVPFIALSAAFGIM). Topologically, residues 857–865 (NKRLGGIQQ) are lumenal. The chain crosses the membrane as a helical span at residues 866–886 (VTFFLAVGMADIVTINFFYLV). The Cytoplasmic segment spans residues 887-894 (KDEGSWKD). The chain crosses the membrane as a helical span at residues 895–915 (IGVSISHFCISNFLILFITAL). The Lumenal portion of the chain corresponds to 916-935 (EHASAILCKNITYTIHEKVN). An N-linked (GlcNAc...) asparagine glycan is attached at Asn925.

It belongs to the PIGG/PIGN/PIGO family. PIGN subfamily.

It localises to the endoplasmic reticulum membrane. Its pathway is glycolipid biosynthesis; glycosylphosphatidylinositol-anchor biosynthesis. In terms of biological role, ethanolamine phosphate transferase involved in glycosylphosphatidylinositol-anchor biosynthesis. Transfers ethanolamine phosphate to the first alpha-1,4-linked mannose of the glycosylphosphatidylinositol precursor of GPI-anchor. This Schizosaccharomyces pombe (strain 972 / ATCC 24843) (Fission yeast) protein is GPI ethanolamine phosphate transferase 1 (its8).